The following is an 88-amino-acid chain: Small ribosomal subunit protein bS20 (88 aa).

The tract at residues 1-23 (MANTSSAKKATRKIARRAAINKN) is disordered.

Belongs to the bacterial ribosomal protein bS20 family.

In terms of biological role, binds directly to 16S ribosomal RNA. The polypeptide is Small ribosomal subunit protein bS20 (Mesorhizobium japonicum (strain LMG 29417 / CECT 9101 / MAFF 303099) (Mesorhizobium loti (strain MAFF 303099))).